The chain runs to 267 residues: Ubiquinone biosynthesis protein COQ4, mitochondrial (267 aa).

A mitochondrion-targeting transit peptide spans 1-17; that stretch reads MSRLKIPSQLLRGGRGF. Residues H153, D154, H157, and E169 each contribute to the Zn(2+) site.

The protein belongs to the COQ4 family. As to quaternary structure, component of a multi-subunit COQ enzyme complex, composed of at least COQ3, COQ4, COQ5, COQ6, COQ7 and COQ9. Requires Zn(2+) as cofactor.

The protein resides in the mitochondrion inner membrane. It catalyses the reaction a 4-hydroxy-3-methoxy-5-(all-trans-polyprenyl)benzoate + H(+) = a 2-methoxy-6-(all-trans-polyprenyl)phenol + CO2. It functions in the pathway cofactor biosynthesis; ubiquinone biosynthesis. Its function is as follows. Lyase that catalyzes the C1-decarboxylation of 4-hydroxy-3-methoxy-5-(all-trans-polyprenyl)benzoic acid into 2-methoxy-6-(all-trans-polyprenyl)phenol during ubiquinone biosynthesis. In Arthroderma otae (strain ATCC MYA-4605 / CBS 113480) (Microsporum canis), this protein is Ubiquinone biosynthesis protein COQ4, mitochondrial.